Reading from the N-terminus, the 247-residue chain is MSKLFWAMLSFITRLPVPRRWSQGLDFEHYSRGIITFPLIGLLLGAISGLVFMVLQAWCGVPLAALFSVLVLALMTGGFHLDGLADTCDGVFSARSRDRMLEIMRDSRLGTHGGLALIFVVLAKILVLSELALRGEPILASLAAACAVSRGTAALLMYRHRYAREEGLGNVFIGKIDGRQTCVTLGLAAIFAAVLLPGMHGVAAMVVTMVAIFILGQLLKRTLGGQTGDTLGAAIEFGELVFLLALL.

5 consecutive transmembrane segments (helical) span residues isoleucine 34–valine 54, cysteine 59–phenylalanine 79, glycine 113–leucine 133, isoleucine 138–tyrosine 158, and valine 194–isoleucine 214.

The protein belongs to the CobS family. Mg(2+) is required as a cofactor.

Its subcellular location is the cell inner membrane. It catalyses the reaction alpha-ribazole + adenosylcob(III)inamide-GDP = adenosylcob(III)alamin + GMP + H(+). The catalysed reaction is alpha-ribazole 5'-phosphate + adenosylcob(III)inamide-GDP = adenosylcob(III)alamin 5'-phosphate + GMP + H(+). It participates in cofactor biosynthesis; adenosylcobalamin biosynthesis; adenosylcobalamin from cob(II)yrinate a,c-diamide: step 7/7. Joins adenosylcobinamide-GDP and alpha-ribazole to generate adenosylcobalamin (Ado-cobalamin). Also synthesizes adenosylcobalamin 5'-phosphate from adenosylcobinamide-GDP and alpha-ribazole 5'-phosphate. The sequence is that of Adenosylcobinamide-GDP ribazoletransferase from Escherichia coli O7:K1 (strain IAI39 / ExPEC).